Consider the following 465-residue polypeptide: Ribulose bisphosphate carboxylase large chain (465 aa).

The residue at position 4 (Lys4) is an N6,N6,N6-trimethyllysine. Substrate-binding residues include Asn113 and Thr163. Lys165 (proton acceptor) is an active-site residue. Lys167 lines the substrate pocket. The Mg(2+) site is built by Lys191, Asp193, and Glu194. Lys191 carries the N6-carboxylysine modification. Residue His284 is the Proton acceptor of the active site. The substrate site is built by Arg285, His317, and Ser369.

The protein belongs to the RuBisCO large chain family. Type I subfamily. Heterohexadecamer of 8 large chains and 8 small chains; disulfide-linked. The disulfide link is formed within the large subunit homodimers. The cofactor is Mg(2+). Post-translationally, the disulfide bond which can form in the large chain dimeric partners within the hexadecamer appears to be associated with oxidative stress and protein turnover.

Its subcellular location is the plastid. It is found in the chloroplast. It catalyses the reaction 2 (2R)-3-phosphoglycerate + 2 H(+) = D-ribulose 1,5-bisphosphate + CO2 + H2O. The enzyme catalyses D-ribulose 1,5-bisphosphate + O2 = 2-phosphoglycolate + (2R)-3-phosphoglycerate + 2 H(+). RuBisCO catalyzes two reactions: the carboxylation of D-ribulose 1,5-bisphosphate, the primary event in carbon dioxide fixation, as well as the oxidative fragmentation of the pentose substrate in the photorespiration process. Both reactions occur simultaneously and in competition at the same active site. The chain is Ribulose bisphosphate carboxylase large chain from Morus rubra (Red mulberry).